The chain runs to 619 residues: Chaperone protein HscA homolog (619 aa).

It belongs to the heat shock protein 70 family.

Functionally, chaperone involved in the maturation of iron-sulfur cluster-containing proteins. Has a low intrinsic ATPase activity which is markedly stimulated by HscB. This is Chaperone protein HscA homolog from Methylococcus capsulatus (strain ATCC 33009 / NCIMB 11132 / Bath).